The primary structure comprises 280 residues: Glycoprotein G (280 aa).

Residues 1-24 form the signal peptide; sequence MGHSGENVLCVALLAIYLAAGGAA. Residues N85 and N111 are each glycosylated (N-linked (GlcNAc...) asparagine; by host). A disordered region spans residues 191-218; the sequence is ESSEERVVATDSDSGSCEDDEKEEKSDC.

The protein belongs to the alphaherpesvirinae glycoprotein G family.

This is Glycoprotein G (gG) from Psittacid herpesvirus 1 (isolate Amazon parrot/-/97-0001/1997) (PsHV-1).